A 1019-amino-acid polypeptide reads, in one-letter code: Katanin p80 WD40 repeat-containing subunit B1 homolog KTN80.1 (1019 aa).

7 WD repeats span residues 13 to 53 (AHSG…SPMS), 56 to 95 (GHTS…MVRA), 98 to 137 (GHRS…CIQT), 140 to 181 (GHTR…HEFK), 183 to 221 (HEGP…LIGT), 224 to 264 (PEAT…DGVD), and 266 to 303 (GWST…LEPY). The short motif at 114–130 (FLASGSSDTNLRVWDTR) is the DWD box element. Disordered stretches follow at residues 388 to 424 (FGPA…TKSG), 455 to 474 (KSGL…LSEQ), 517 to 581 (IHRS…GSRE), and 607 to 652 (RGEK…RARS). Over residues 465-474 (QTQNAFLSEQ) the composition is skewed to polar residues. Positions 553–572 (IPSKTERVLSREKPGDEQKN) are enriched in basic and acidic residues. Residues 614–628 (TEGASTTIEQNNNAV) are compositionally biased toward polar residues.

Belongs to the WD repeat KATNB1 family. Component of KTN80-KTN1 complexes composed of a hexamer of KTN1-KTN80 heterodimers that sense microtubule (MT) geometry to confer precise MT severing. Interacts directly with AAA1/KTN1 and KTN80.3, and weakly with KTN80.4. Expressed at low levels in siliques, flowers, leaves, stems and roots.

The protein resides in the cytoplasm. It is found in the cytoskeleton. May participate in a complex which severs microtubules in an ATP-dependent manner. Microtubule severing may promote rapid reorganization of cellular microtubule arrays. Confers precision to microtubule (MT) severing by specific targeting of KTN1 to MT cleavage sites such as crossover or branching nucleation sites. Together with other KTN80s, regulates cell elongation by modulating MT organization. This Arabidopsis thaliana (Mouse-ear cress) protein is Katanin p80 WD40 repeat-containing subunit B1 homolog KTN80.1.